The sequence spans 89 residues: Myrmicitoxin(1)-Pr2c (89 aa).

Positions 1–23 are cleaved as a signal peptide; the sequence is MEIPKLLYIAVIAIGLSGSLTCA. A propeptide spanning residues 24–61 is cleaved from the precursor; it reads TPLANPWADPEAEANPKAKATAEATAEAIAEALAEPEP. Asn88 carries the asparagine amide modification.

The protein belongs to the formicidae venom clade 1 family. In terms of tissue distribution, expressed by the venom gland.

The protein resides in the secreted. Functionally, vertebrate-selective toxin that causes pain by targeting voltage-gated sodium channels. In Pogonomyrmex rugosus (Desert harvester ant), this protein is Myrmicitoxin(1)-Pr2c.